The following is a 173-amino-acid chain: uncharacterized protein (173 aa).

Belongs to the ycf73 family.

Its subcellular location is the plastid. It is found in the chloroplast. This is an uncharacterized protein from Saccharum hybrid (Sugarcane).